Consider the following 111-residue polypeptide: Cytochrome b-c1 complex subunit 7 (111 aa).

The residue at position 2 (Ala2) is an N-acetylalanine. Lys19 is modified (N6-acetyllysine). An N6-acetyllysine; alternate modification is found at Lys78. Lys78 carries the N6-succinyllysine; alternate modification. Lys83 carries the N6-acetyllysine modification. Lys88 is subject to N6-acetyllysine; alternate. Lys88 is subject to N6-succinyllysine; alternate. Lys96 is modified (N6-acetyllysine).

Belongs to the UQCRB/QCR7 family. In terms of assembly, component of the ubiquinol-cytochrome c oxidoreductase (cytochrome b-c1 complex, complex III, CIII), a multisubunit enzyme composed of 11 subunits. The complex is composed of 3 respiratory subunits cytochrome b, cytochrome c1 and Rieske protein UQCRFS1, 2 core protein subunits UQCRC1/QCR1 and UQCRC2/QCR2, and 6 low-molecular weight protein subunits UQCRH/QCR6, UQCRB/QCR7, UQCRQ/QCR8, UQCR10/QCR9, UQCR11/QCR10 and subunit 9, the cleavage product of Rieske protein UQCRFS1. The complex exists as an obligatory dimer and forms supercomplexes (SCs) in the inner mitochondrial membrane with NADH-ubiquinone oxidoreductase (complex I, CI) and cytochrome c oxidase (complex IV, CIV), resulting in different assemblies (supercomplex SCI(1)III(2)IV(1) and megacomplex MCI(2)III(2)IV(2)).

It localises to the mitochondrion inner membrane. Its function is as follows. Component of the ubiquinol-cytochrome c oxidoreductase, a multisubunit transmembrane complex that is part of the mitochondrial electron transport chain which drives oxidative phosphorylation. The respiratory chain contains 3 multisubunit complexes succinate dehydrogenase (complex II, CII), ubiquinol-cytochrome c oxidoreductase (cytochrome b-c1 complex, complex III, CIII) and cytochrome c oxidase (complex IV, CIV), that cooperate to transfer electrons derived from NADH and succinate to molecular oxygen, creating an electrochemical gradient over the inner membrane that drives transmembrane transport and the ATP synthase. The cytochrome b-c1 complex catalyzes electron transfer from ubiquinol to cytochrome c, linking this redox reaction to translocation of protons across the mitochondrial inner membrane, with protons being carried across the membrane as hydrogens on the quinol. In the process called Q cycle, 2 protons are consumed from the matrix, 4 protons are released into the intermembrane space and 2 electrons are passed to cytochrome c. The polypeptide is Cytochrome b-c1 complex subunit 7 (UQCRB) (Bos taurus (Bovine)).